The primary structure comprises 103 residues: Ubiquitin-related modifier 1 (103 aa).

1-thioglycine is present on G103. A Glycyl lysine isopeptide (Gly-Lys) (interchain with K-? in acceptor proteins) cross-link involves residue G103.

It belongs to the URM1 family. In terms of processing, C-terminal thiocarboxylation occurs in 2 steps, it is first acyl-adenylated (-COAMP) via the hesA/moeB/thiF part of UBA4, then thiocarboxylated (-COSH) via the rhodanese domain of UBA4.

It is found in the cytoplasm. It functions in the pathway tRNA modification; 5-methoxycarbonylmethyl-2-thiouridine-tRNA biosynthesis. In terms of biological role, acts as a sulfur carrier required for 2-thiolation of mcm(5)S(2)U at tRNA wobble positions of cytosolic tRNA(Lys), tRNA(Glu) and tRNA(Gln). Serves as sulfur donor in tRNA 2-thiolation reaction by being thiocarboxylated (-COSH) at its C-terminus by the MOCS3 homolog UBA4. The sulfur is then transferred to tRNA to form 2-thiolation of mcm(5)S(2)U. Prior mcm(5) tRNA modification by the elongator complex is required for 2-thiolation. Also acts as a ubiquitin-like protein (UBL) that is covalently conjugated via an isopeptide bond to lysine residues of target proteins such as AHP1. The thiocarboxylated form serves as substrate for conjugation and oxidative stress specifically induces the formation of UBL-protein conjugates. The sequence is that of Ubiquitin-related modifier 1 from Vanderwaltozyma polyspora (strain ATCC 22028 / DSM 70294 / BCRC 21397 / CBS 2163 / NBRC 10782 / NRRL Y-8283 / UCD 57-17) (Kluyveromyces polysporus).